Consider the following 314-residue polypeptide: Ornithine carbamoyltransferase (314 aa).

Residues 58 to 61, glutamine 85, arginine 109, and 136 to 139 each bind carbamoyl phosphate; these read STRT and HPAQ. L-ornithine is bound by residues asparagine 169, aspartate 233, and 237–238; that span reads SM. Carbamoyl phosphate is bound by residues 273-274 and arginine 301; that span reads CL.

This sequence belongs to the aspartate/ornithine carbamoyltransferase superfamily. OTCase family.

It localises to the cytoplasm. It catalyses the reaction carbamoyl phosphate + L-ornithine = L-citrulline + phosphate + H(+). It participates in amino-acid degradation; L-arginine degradation via ADI pathway; carbamoyl phosphate from L-arginine: step 2/2. In terms of biological role, reversibly catalyzes the transfer of the carbamoyl group from carbamoyl phosphate (CP) to the N(epsilon) atom of ornithine (ORN) to produce L-citrulline. The chain is Ornithine carbamoyltransferase from Staphylothermus marinus (strain ATCC 43588 / DSM 3639 / JCM 9404 / F1).